The chain runs to 352 residues: Dihydrorhizobitoxine desaturase (352 aa).

Transmembrane regions (helical) follow at residues 53 to 73 (LATLCVSWWLYPLAVLLIGAY), 89 to 109 (LAKNTTWNYVLGILFAAYPLF), and 204 to 224 (IGILAGSYALGLLHIVILFWI).

Belongs to the fatty acid desaturase type 1 family.

The protein resides in the cell inner membrane. It catalyses the reaction dihydrorhizobitoxine + 2 reduced [2Fe-2S]-[ferredoxin] + O2 + 2 H(+) = rhizobitoxine + 2 oxidized [2Fe-2S]-[ferredoxin] + 2 H2O. Involved in the biosynthesis of the nodulation enhancer compound rhizobitoxine. Catalyzes the final step of the pathway, the introduction of a carbon double bond into the C3 position of dihydrorhizobitoxine to produce rhizobitoxine. The chain is Dihydrorhizobitoxine desaturase from Bradyrhizobium elkanii.